Here is a 317-residue protein sequence, read N- to C-terminus: Succinate receptor 1 (317 aa).

Topologically, residues 1 to 23 (MAQNLSCENWLATEAILNKYYLS) are extracellular. A glycan (N-linked (GlcNAc...) asparagine) is linked at asparagine 4. A helical membrane pass occupies residues 24–47 (AFYAIEFIFGLLGNVTVVFGYLFC). Over 48–55 (MKNWNSSN) the chain is Cytoplasmic. Residues 56–76 (VYLFNLSISDFAFLCTLPILI) form a helical membrane-spanning segment. Residues 77 to 101 (KSYANDKGTYGDVLCISNRYVLHTN) are Extracellular-facing. Cysteine 91 and cysteine 168 are joined by a disulfide. A helical transmembrane segment spans residues 102–119 (LYTSILFLTFISMDRYLL). Topologically, residues 120 to 133 (MKYPFREHFLQKKE) are cytoplasmic. Residues 134 to 157 (FAILISLAVWALVTLEVLPMLTFI) traverse the membrane as a helical segment. Topologically, residues 158–180 (NSVPKEEGSNCIDYASSGNPEHN) are extracellular. A helical transmembrane segment spans residues 181 to 204 (LIYSLCLTLLGFLIPLSVMCFFYY). Residues 205-228 (KMVVFLKRRSQQQATALPLDKPQR) are Cytoplasmic-facing. Residues 229–246 (LVVLAVVIFSILFTPYHI) traverse the membrane as a helical segment. Over 247-277 (MRNLRIASRLDSWPQGCTQKAIKSIYTLTRP) the chain is Extracellular. The chain crosses the membrane as a helical span at residues 278–294 (LAFLNSAINPIFYFLMG). Residues 295–317 (DHYREMLISKFRQYFKSLTSFRT) lie on the Cytoplasmic side of the membrane.

The protein belongs to the G-protein coupled receptor 1 family. As to expression, predominantly expressed in the kidney (proximal and distal tubules and the juxtaglomerular apparatus). Weakly expressed in liver, spleen and small intestine. Highly expressed in immature dendritic cells, expression rapidly downregulates after maturation. Also expressed in macrophages. Specifically expressed in intestinal tuft cells. Expression in whole muscle is attributable to major non-myofibrillar resident cell types, including stromal, endothelial and satellite cell populations.

Its subcellular location is the cell membrane. Its function is as follows. G protein-coupled receptor for succinate able to mediate signaling through Gq/GNAQ or Gi/GNAI second messengers depending on the cell type and the processes regulated. Succinate-SUCNR1 signaling serves as a link between metabolic stress, inflammation and energy homeostasis. In macrophages, plays a range of immune-regulatory roles. During inflammation, succinate-SUCNR1 signaling may act as an anti-inflammatory mediator or boost inflammation depending on the inflammatory status of cells. Hyperpolarizes M2 macrophages versus M1 phenotype through Gq signaling by regulating the transcription of genes involved in immune function. In activated M1 macrophages, plays a pro-inflammatory role in response to LPS. Expressed in dendritic cells, where it is involved in the sensing of immunological danger and enhances immunity. Mediates succinate triggered intracelleular calcium mobilization, induces migratory responses and acts in synergy with Toll-like receptor ligands for the production of proinflammatory cytokines as well as an enhancement of antigen-specific activation of helper T cells. In the small intestine, mediates the activation of tuft cells by dietary succinate and triggers type 2 immunity. In adipocytes, plays an important role in the control of energy metabolism. In response to succinate, controls leptin expression in an AMPK-JNK-CEBPA-dependent as well as circadian clock-regulated manner. In muscle tissue, is expressed in non-muscle cells and coordinates muscle remodeling in response to the succinate produced during exercise training in a paracrine manner. In retina, acts as a mediator of vessel growth during retinal development. In response to succinate, regulates the production of angiogenic factors, including VEGF, by retinal ganglion neurons. The sequence is that of Succinate receptor 1 (Sucnr1) from Mus musculus (Mouse).